The chain runs to 505 residues: MEIRAEEISQIIKEQIKDYDKKVDLSETGTVLSVGDGIARVYGLEKAMALELVEFPGGILGLVLNLEEDNVGVAIMGEVTHIKEGDMVKRTGKIAQVPVGEAVLGRVVDGVGSPIDGKGPLDATETRMVEMVAPGVIARKSVHEPCYTGLKAVDAMTPVGRGQRELIIGDRQIGKTAVAVDAILAQKDTDIYCIYVACGQKKSTVAQVVATLEKYGAMEYTTVVSACASDPATLQYLAPYAGCAMGEYFRDKGQHALIIYDDLSKQAVAYRQISLLLRRPPGREAYPGDIFYNHSRLLERAAKVSDELGAGSLTALPIIETQAGDVSAYIPTNVISITDGQIYLEPGLFFAGVRPAINVGLSVSRVGGAAQEKAMKQVAGTLRMDLAQFRELEAFAAFGSDLDAATQKQLKRGERLVQILKQPQYAPLPLEKQVAILFAGANGFLDAFPADSMAKYEAGMYSFLESKYPDAMGAIAKERKISDETDALLKKALEEYGKEFQDTIQ.

Residue 169-176 (GDRQIGKT) participates in ATP binding.

Belongs to the ATPase alpha/beta chains family. F-type ATPases have 2 components, CF(1) - the catalytic core - and CF(0) - the membrane proton channel. CF(1) has five subunits: alpha(3), beta(3), gamma(1), delta(1), epsilon(1). CF(0) has three main subunits: a(1), b(2) and c(9-12). The alpha and beta chains form an alternating ring which encloses part of the gamma chain. CF(1) is attached to CF(0) by a central stalk formed by the gamma and epsilon chains, while a peripheral stalk is formed by the delta and b chains.

It localises to the cell inner membrane. It carries out the reaction ATP + H2O + 4 H(+)(in) = ADP + phosphate + 5 H(+)(out). Its function is as follows. Produces ATP from ADP in the presence of a proton gradient across the membrane. The alpha chain is a regulatory subunit. In Desulfatibacillum aliphaticivorans, this protein is ATP synthase subunit alpha.